The following is a 255-amino-acid chain: 3-deoxy-manno-octulosonate cytidylyltransferase (255 aa).

It belongs to the KdsB family.

The protein resides in the cytoplasm. The catalysed reaction is 3-deoxy-alpha-D-manno-oct-2-ulosonate + CTP = CMP-3-deoxy-beta-D-manno-octulosonate + diphosphate. It functions in the pathway nucleotide-sugar biosynthesis; CMP-3-deoxy-D-manno-octulosonate biosynthesis; CMP-3-deoxy-D-manno-octulosonate from 3-deoxy-D-manno-octulosonate and CTP: step 1/1. It participates in bacterial outer membrane biogenesis; lipopolysaccharide biosynthesis. Activates KDO (a required 8-carbon sugar) for incorporation into bacterial lipopolysaccharide in Gram-negative bacteria. The protein is 3-deoxy-manno-octulosonate cytidylyltransferase of Hahella chejuensis (strain KCTC 2396).